The chain runs to 183 residues: ATP synthase subunit b 2 (183 aa).

A helical membrane pass occupies residues 27–47; that stretch reads PSFYAFLALLIFFGLLLHMGV.

Belongs to the ATPase B chain family. As to quaternary structure, F-type ATPases have 2 components, F(1) - the catalytic core - and F(0) - the membrane proton channel. F(1) has five subunits: alpha(3), beta(3), gamma(1), delta(1), epsilon(1). F(0) has three main subunits: a(1), b(2) and c(10-14). The alpha and beta chains form an alternating ring which encloses part of the gamma chain. F(1) is attached to F(0) by a central stalk formed by the gamma and epsilon chains, while a peripheral stalk is formed by the delta and b chains.

It localises to the cell inner membrane. In terms of biological role, f(1)F(0) ATP synthase produces ATP from ADP in the presence of a proton or sodium gradient. F-type ATPases consist of two structural domains, F(1) containing the extramembraneous catalytic core and F(0) containing the membrane proton channel, linked together by a central stalk and a peripheral stalk. During catalysis, ATP synthesis in the catalytic domain of F(1) is coupled via a rotary mechanism of the central stalk subunits to proton translocation. Functionally, component of the F(0) channel, it forms part of the peripheral stalk, linking F(1) to F(0). This is ATP synthase subunit b 2 from Maricaulis maris (strain MCS10) (Caulobacter maris).